The chain runs to 305 residues: Nitrogen assimilation regulatory protein nac (305 aa).

The HTH lysR-type domain maps to 1–58 (MNLRRLKYFVKIVDIGSLTQAAEVLHIAQPALSQQVATLEGEMDQQLLIRTKRGVTPT). Residues 18-37 (LTQAAEVLHIAQPALSQQVA) constitute a DNA-binding region (H-T-H motif).

It belongs to the LysR transcriptional regulatory family.

Transcriptional activator for the hut, put and ure operons and repressor for the gdh and gltB operons in response to nitrogen limitation. Negative regulator of its own expression. The sequence is that of Nitrogen assimilation regulatory protein nac (nac) from Klebsiella aerogenes (Enterobacter aerogenes).